Here is a 572-residue protein sequence, read N- to C-terminus: Sulfite reductase [NADPH] hemoprotein beta-component (572 aa).

[4Fe-4S] cluster-binding residues include cysteine 437, cysteine 443, cysteine 482, and cysteine 486. Cysteine 486 is a binding site for siroheme.

This sequence belongs to the nitrite and sulfite reductase 4Fe-4S domain family. As to quaternary structure, alpha(8)-beta(8). The alpha component is a flavoprotein, the beta component is a hemoprotein. Siroheme is required as a cofactor. The cofactor is [4Fe-4S] cluster.

It carries out the reaction hydrogen sulfide + 3 NADP(+) + 3 H2O = sulfite + 3 NADPH + 4 H(+). The protein operates within sulfur metabolism; hydrogen sulfide biosynthesis; hydrogen sulfide from sulfite (NADPH route): step 1/1. Component of the sulfite reductase complex that catalyzes the 6-electron reduction of sulfite to sulfide. This is one of several activities required for the biosynthesis of L-cysteine from sulfate. In Bacillus licheniformis (strain ATCC 14580 / DSM 13 / JCM 2505 / CCUG 7422 / NBRC 12200 / NCIMB 9375 / NCTC 10341 / NRRL NRS-1264 / Gibson 46), this protein is Sulfite reductase [NADPH] hemoprotein beta-component.